We begin with the raw amino-acid sequence, 335 residues long: Large ribosomal subunit protein uL3 (335 aa).

3 disordered regions span residues 1–35 (MPQP…ADDG), 234–256 (IGNL…GQTG), and 312–335 (AVRP…SNQG). A compositionally biased stretch (polar residues) spans 244–256 (RVRSTVPQQGQTG).

This sequence belongs to the universal ribosomal protein uL3 family. In terms of assembly, part of the 50S ribosomal subunit. Forms a cluster with proteins L14 and L24e.

In terms of biological role, one of the primary rRNA binding proteins, it binds directly near the 3'-end of the 23S rRNA, where it nucleates assembly of the 50S subunit. This is Large ribosomal subunit protein uL3 from Halobacterium salinarum (strain ATCC 29341 / DSM 671 / R1).